Here is a 593-residue protein sequence, read N- to C-terminus: 2-succinyl-5-enolpyruvyl-6-hydroxy-3-cyclohexene-1-carboxylate synthase (593 aa).

It belongs to the TPP enzyme family. MenD subfamily. Homodimer. The cofactor is Mg(2+). Requires Mn(2+) as cofactor. Thiamine diphosphate is required as a cofactor.

It catalyses the reaction isochorismate + 2-oxoglutarate + H(+) = 5-enolpyruvoyl-6-hydroxy-2-succinyl-cyclohex-3-ene-1-carboxylate + CO2. Its pathway is quinol/quinone metabolism; 1,4-dihydroxy-2-naphthoate biosynthesis; 1,4-dihydroxy-2-naphthoate from chorismate: step 2/7. The protein operates within quinol/quinone metabolism; menaquinone biosynthesis. In terms of biological role, catalyzes the thiamine diphosphate-dependent decarboxylation of 2-oxoglutarate and the subsequent addition of the resulting succinic semialdehyde-thiamine pyrophosphate anion to isochorismate to yield 2-succinyl-5-enolpyruvyl-6-hydroxy-3-cyclohexene-1-carboxylate (SEPHCHC). This is 2-succinyl-5-enolpyruvyl-6-hydroxy-3-cyclohexene-1-carboxylate synthase from Pelodictyon phaeoclathratiforme (strain DSM 5477 / BU-1).